Here is a 151-residue protein sequence, read N- to C-terminus: 6,7-dimethyl-8-ribityllumazine synthase (151 aa).

Residues Phe15, 47–49 (TFE), and 71–73 (AVI) each bind 5-amino-6-(D-ribitylamino)uracil. 76–77 (ET) is a (2S)-2-hydroxy-3-oxobutyl phosphate binding site. Residue His79 is the Proton donor of the active site. Leu104 contributes to the 5-amino-6-(D-ribitylamino)uracil binding site. Position 119 (Arg119) interacts with (2S)-2-hydroxy-3-oxobutyl phosphate.

The protein belongs to the DMRL synthase family.

It carries out the reaction (2S)-2-hydroxy-3-oxobutyl phosphate + 5-amino-6-(D-ribitylamino)uracil = 6,7-dimethyl-8-(1-D-ribityl)lumazine + phosphate + 2 H2O + H(+). The protein operates within cofactor biosynthesis; riboflavin biosynthesis; riboflavin from 2-hydroxy-3-oxobutyl phosphate and 5-amino-6-(D-ribitylamino)uracil: step 1/2. Catalyzes the formation of 6,7-dimethyl-8-ribityllumazine by condensation of 5-amino-6-(D-ribitylamino)uracil with 3,4-dihydroxy-2-butanone 4-phosphate. This is the penultimate step in the biosynthesis of riboflavin. The chain is 6,7-dimethyl-8-ribityllumazine synthase from Metallosphaera sedula (strain ATCC 51363 / DSM 5348 / JCM 9185 / NBRC 15509 / TH2).